The following is a 715-amino-acid chain: Harpin secretion protein HrpI (715 aa).

A run of 7 helical transmembrane segments spans residues 23–43, 45–65, 69–89, 115–135, 203–223, 241–261, and 298–318; these read GAAI…TGLI, VLIA…MYLP, AFST…ALSI, GNLA…FLVI, AIAG…IGVL, IGDG…AGMI, and MLGF…ISAI.

Belongs to the FHIPEP (flagella/HR/invasion proteins export pore) family.

The protein resides in the cell inner membrane. Involved in the secretion of harpin; a proteinaceous elicitor of the hypersensitivity response in plants. In Erwinia amylovora (Fire blight bacteria), this protein is Harpin secretion protein HrpI (hrpI).